Reading from the N-terminus, the 136-residue chain is Histone H3.3 (136 aa).

The segment at 1–42 is disordered; it reads MARTKQTARKSTGGKAPRKQLASKAARKSAPVSGGVKKPHRY. Lys-5 is subject to N6,N6,N6-trimethyllysine; alternate. An N6,N6-dimethyllysine; alternate modification is found at Lys-5. N6-methyllysine; alternate occurs at positions 5 and 10. Lys-10 is subject to N6-acetyllysine; alternate. At Ser-11 the chain carries Phosphoserine. Lys-15 carries the post-translational modification N6,N6-dimethyllysine; alternate. N6-acetyllysine; alternate occurs at positions 15, 19, 24, 28, and 37. 4 positions are modified to N6-methyllysine; alternate: Lys-19, Lys-24, Lys-28, and Lys-37. Residues Lys-28 and Lys-37 each carry the N6,N6,N6-trimethyllysine; alternate modification. N6,N6-dimethyllysine; alternate occurs at positions 28 and 37. An N6-acetyllysine mark is found at Lys-57 and Lys-65. Lys-80 carries the N6,N6,N6-trimethyllysine; alternate modification. Residue Lys-80 is modified to N6,N6-dimethyllysine; alternate. Residue Lys-80 is modified to N6-methyllysine; alternate.

This sequence belongs to the histone H3 family. As to quaternary structure, the nucleosome is a histone octamer containing two molecules each of H2A, H2B, H3 and H4 assembled in one H3-H4 heterotetramer and two H2A-H2B heterodimers. The octamer wraps approximately 147 bp of DNA. In terms of processing, phosphorylated by IPL1 to form H3S10ph. H3S10ph promotes subsequent H3K14ac formation and is required for transcriptional activation through TBP recruitment to the promoters. Mono-, di- and trimethylated by the COMPASS complex to form H3K4me1/2/3. H3K4me activates gene expression by regulating transcription elongation and plays a role in telomere length maintenance. H3K4me enrichment correlates with transcription levels, and occurs in a 5' to 3' gradient with H3K4me3 enrichment at the 5'-end of genes, shifting to H3K4me2 and then H3K4me1. Methylated by SET2 to form H3K36me. H3K36me represses gene expression. Methylated by DOT1 to form H3K79me. H3K79me is required for association of SIR proteins with telomeric regions and for telomeric silencing. The COMPASS-mediated formation of H3K4me2/3 and the DOT1-mediated formation of H3K79me require H2BK123ub1. Post-translationally, acetylation of histone H3 leads to transcriptional activation. H3K14ac formation by GCN5 is promoted by H3S10ph. H3K14ac can also be formed by ESA1. H3K56ac formation occurs predominantly in newly synthesized H3 molecules during G1, S and G2/M of the cell cycle and may be involved in DNA repair.

The protein localises to the nucleus. The protein resides in the chromosome. Its function is as follows. Core component of nucleosome. Nucleosomes wrap and compact DNA into chromatin, limiting DNA accessibility to the cellular machineries which require DNA as a template. Histones thereby play a central role in transcription regulation, DNA repair, DNA replication and chromosomal stability. DNA accessibility is regulated via a complex set of post-translational modifications of histones, also called histone code, and nucleosome remodeling. The protein is Histone H3.3 (HHT3) of Candida albicans (strain SC5314 / ATCC MYA-2876) (Yeast).